A 79-amino-acid chain; its full sequence is D-alanyl carrier protein (79 aa).

Residues 1–76 (MKEQIFDIIE…KIAARVQEKK (76 aa)) form the Carrier domain. Serine 34 is subject to O-(pantetheine 4'-phosphoryl)serine.

This sequence belongs to the DltC family. Post-translationally, 4'-phosphopantetheine is transferred from CoA to a specific serine of apo-DCP.

The protein resides in the cytoplasm. The protein operates within cell wall biogenesis; lipoteichoic acid biosynthesis. Carrier protein involved in the D-alanylation of lipoteichoic acid (LTA). The loading of thioester-linked D-alanine onto DltC is catalyzed by D-alanine--D-alanyl carrier protein ligase DltA. The DltC-carried D-alanyl group is further transferred to cell membrane phosphatidylglycerol (PG) by forming an ester bond, probably catalyzed by DltD. D-alanylation of LTA plays an important role in modulating the properties of the cell wall in Gram-positive bacteria, influencing the net charge of the cell wall. The protein is D-alanyl carrier protein of Lactococcus lactis subsp. lactis (strain IL1403) (Streptococcus lactis).